A 210-amino-acid chain; its full sequence is Protein GrpE (210 aa).

Residues 1–71 (MSEKDQSVNN…DTKIKELEKL (71 aa)) form a disordered region. Residues 11–23 (TEEDFNVETEDNQ) are compositionally biased toward acidic residues. Residues 24–35 (NDTNIENSVSNT) are compositionally biased toward polar residues. Residues 36 to 46 (DNSEANASDSE) are compositionally biased toward low complexity. Over residues 47 to 60 (NNSEESIKDEESES) the composition is skewed to acidic residues. A compositionally biased stretch (basic and acidic residues) spans 61–71 (QDTKIKELEKL).

The protein belongs to the GrpE family. In terms of assembly, homodimer.

Its subcellular location is the cytoplasm. Participates actively in the response to hyperosmotic and heat shock by preventing the aggregation of stress-denatured proteins, in association with DnaK and GrpE. It is the nucleotide exchange factor for DnaK and may function as a thermosensor. Unfolded proteins bind initially to DnaJ; upon interaction with the DnaJ-bound protein, DnaK hydrolyzes its bound ATP, resulting in the formation of a stable complex. GrpE releases ADP from DnaK; ATP binding to DnaK triggers the release of the substrate protein, thus completing the reaction cycle. Several rounds of ATP-dependent interactions between DnaJ, DnaK and GrpE are required for fully efficient folding. In Staphylococcus epidermidis (strain ATCC 35984 / DSM 28319 / BCRC 17069 / CCUG 31568 / BM 3577 / RP62A), this protein is Protein GrpE.